Reading from the N-terminus, the 80-residue chain is Small ribosomal subunit protein uS17 (80 aa).

The protein belongs to the universal ribosomal protein uS17 family. In terms of assembly, part of the 30S ribosomal subunit.

Functionally, one of the primary rRNA binding proteins, it binds specifically to the 5'-end of 16S ribosomal RNA. The polypeptide is Small ribosomal subunit protein uS17 (Microcystis aeruginosa (strain NIES-843 / IAM M-2473)).